We begin with the raw amino-acid sequence, 328 residues long: Putative tyrosine-protein kinase C03B1.5 (328 aa).

Residues 25 to 288 (WSPALKIGSG…ALHASSQTYL (264 aa)) form the Protein kinase domain. ATP is bound by residues 31 to 39 (IGSGAFGEV) and Lys62. Catalysis depends on Asp155, which acts as the Proton acceptor.

Belongs to the protein kinase superfamily. Tyr protein kinase family.

It catalyses the reaction L-tyrosyl-[protein] + ATP = O-phospho-L-tyrosyl-[protein] + ADP + H(+). The protein is Putative tyrosine-protein kinase C03B1.5 of Caenorhabditis elegans.